A 99-amino-acid chain; its full sequence is Small ribosomal subunit protein eS24 (99 aa).

Belongs to the eukaryotic ribosomal protein eS24 family.

The polypeptide is Small ribosomal subunit protein eS24 (Methanothrix thermoacetophila (strain DSM 6194 / JCM 14653 / NBRC 101360 / PT) (Methanosaeta thermophila)).